Consider the following 119-residue polypeptide: Large ribosomal subunit protein bL20c (119 aa).

This sequence belongs to the bacterial ribosomal protein bL20 family.

Its subcellular location is the plastid. The protein resides in the chloroplast. In terms of biological role, binds directly to 23S ribosomal RNA and is necessary for the in vitro assembly process of the 50S ribosomal subunit. It is not involved in the protein synthesizing functions of that subunit. This is Large ribosomal subunit protein bL20c (rpl20) from Zea mays (Maize).